We begin with the raw amino-acid sequence, 101 residues long: Large ribosomal subunit protein uL23 (101 aa).

The protein belongs to the universal ribosomal protein uL23 family. In terms of assembly, part of the 50S ribosomal subunit. Contacts protein L29, and trigger factor when it is bound to the ribosome.

Its function is as follows. One of the early assembly proteins it binds 23S rRNA. One of the proteins that surrounds the polypeptide exit tunnel on the outside of the ribosome. Forms the main docking site for trigger factor binding to the ribosome. This is Large ribosomal subunit protein uL23 from Nocardia farcinica (strain IFM 10152).